The sequence spans 231 residues: Venom allergen 3 homolog (231 aa).

The first 21 residues, 1 to 21, serve as a signal peptide directing secretion; sequence MSSCMLFFTVIIAGVFMGTIA. 3 disulfide bridges follow: C25-C40, C30-C124, and C51-C117. One can recognise an SCP domain in the interval 68–215; sequence VTLHNQLRRK…WNQQYLVCNY (148 aa). N-linked (GlcNAc...) asparagine glycosylation is present at N145. C196 and C213 are disulfide-bonded.

The protein belongs to the CRISP family. Expressed by the venom gland.

It is found in the secreted. The protein is Venom allergen 3 homolog of Dinoponera quadriceps (South American ant).